The following is a 414-amino-acid chain: 2,3-diketo-5-methylthiopentyl-1-phosphate enolase (414 aa).

Lys-99 functions as the Proton acceptor in the catalytic mechanism. Residues Lys-148, Lys-174–Glu-177, His-265, Gly-338, and Gly-360–Gly-361 each bind substrate. 3 residues coordinate Mg(2+): Lys-174, Asp-176, and Glu-177. Position 174 is an N6-carboxylysine (Lys-174).

Belongs to the RuBisCO large chain family. Type IV subfamily. As to quaternary structure, homodimer. Mg(2+) is required as a cofactor.

The catalysed reaction is 5-methylsulfanyl-2,3-dioxopentyl phosphate = 2-hydroxy-5-methylsulfanyl-3-oxopent-1-enyl phosphate. Its pathway is amino-acid biosynthesis; L-methionine biosynthesis via salvage pathway; L-methionine from S-methyl-5-thio-alpha-D-ribose 1-phosphate: step 3/6. In terms of biological role, catalyzes the enolization of 2,3-diketo-5-methylthiopentyl-1-phosphate (DK-MTP-1-P) into 2-hydroxy-3-keto-5-methylthiopentenyl-1-phosphate (HK-MTPenyl-1-P). In Bacillus cereus (strain ATCC 14579 / DSM 31 / CCUG 7414 / JCM 2152 / NBRC 15305 / NCIMB 9373 / NCTC 2599 / NRRL B-3711), this protein is 2,3-diketo-5-methylthiopentyl-1-phosphate enolase.